The chain runs to 254 residues: 3-dehydroquinate dehydratase (254 aa).

3-dehydroquinate contacts are provided by residues 47-49 and Arg-83; that span reads EFR. His-144 serves as the catalytic Proton donor/acceptor. Residue Lys-171 is the Schiff-base intermediate with substrate of the active site. Residues Arg-213, Ser-232, and Gln-236 each contribute to the 3-dehydroquinate site.

This sequence belongs to the type-I 3-dehydroquinase family. As to quaternary structure, homodimer.

It carries out the reaction 3-dehydroquinate = 3-dehydroshikimate + H2O. It functions in the pathway metabolic intermediate biosynthesis; chorismate biosynthesis; chorismate from D-erythrose 4-phosphate and phosphoenolpyruvate: step 3/7. Its function is as follows. Involved in the third step of the chorismate pathway, which leads to the biosynthesis of aromatic amino acids. Catalyzes the cis-dehydration of 3-dehydroquinate (DHQ) and introduces the first double bond of the aromatic ring to yield 3-dehydroshikimate. The sequence is that of 3-dehydroquinate dehydratase from Neisseria meningitidis serogroup A / serotype 4A (strain DSM 15465 / Z2491).